A 264-amino-acid chain; its full sequence is 3-methyl-2-oxobutanoate hydroxymethyltransferase (264 aa).

Positions 45 and 84 each coordinate Mg(2+). 3-methyl-2-oxobutanoate is bound by residues 45–46 (DS), aspartate 84, and lysine 112. Glutamate 114 provides a ligand contact to Mg(2+). Catalysis depends on glutamate 181, which acts as the Proton acceptor.

Belongs to the PanB family. In terms of assembly, homodecamer; pentamer of dimers. Requires Mg(2+) as cofactor.

The protein resides in the cytoplasm. The catalysed reaction is 3-methyl-2-oxobutanoate + (6R)-5,10-methylene-5,6,7,8-tetrahydrofolate + H2O = 2-dehydropantoate + (6S)-5,6,7,8-tetrahydrofolate. Its pathway is cofactor biosynthesis; (R)-pantothenate biosynthesis; (R)-pantoate from 3-methyl-2-oxobutanoate: step 1/2. Its function is as follows. Catalyzes the reversible reaction in which hydroxymethyl group from 5,10-methylenetetrahydrofolate is transferred onto alpha-ketoisovalerate to form ketopantoate. This Shewanella sp. (strain MR-4) protein is 3-methyl-2-oxobutanoate hydroxymethyltransferase.